A 96-amino-acid chain; its full sequence is GQMPLHMRLPKLKGFKNPFKTEFQVVNLDKLAALYPEGGEVTVADLVAKGAVRKNSLVKVLGQGEISVALQVTVDAVSGSAKEKITAAGGTVTELV.

This sequence belongs to the universal ribosomal protein uL15 family. As to quaternary structure, part of the 50S ribosomal subunit.

Binds to the 23S rRNA. The protein is Large ribosomal subunit protein uL15 (rplO) of Streptomyces scabiei.